A 60-amino-acid polypeptide reads, in one-letter code: Toxin TdNa2 (60 aa).

The LCN-type CS-alpha/beta domain occupies 1–59; it reads RDAYPADWRGCKPSCPWGSSSWCNEECTSLGGSSGYCAWPACWCYGLPDSVRYYNNKCH. 4 cysteine pairs are disulfide-bonded: C11–C58, C15–C37, C23–C42, and C27–C44.

The protein belongs to the long (4 C-C) scorpion toxin superfamily. Sodium channel inhibitor family. Beta subfamily. In terms of tissue distribution, expressed by the venom gland.

It is found in the secreted. In terms of biological role, inhibits the sodium currents (Nav) in an apparent irreversible manner. Produces small depolarization and induces repetitive firing in squid axons. Is specific for arthropods (crickets, triatomides, crabs and squids), but is non-toxic to mice. The sequence is that of Toxin TdNa2 from Tityus discrepans (Venezuelan scorpion).